Consider the following 625-residue polypeptide: UvrABC system protein C (625 aa).

Residues 26–105 (LEPGVYFLRD…IKQHQPHFNT (80 aa)) enclose the GIY-YIG domain. The UVR domain occupies 215 to 250 (GELLEKLATKMLAASENLDFEQAATIRDQIRGLQAL).

This sequence belongs to the UvrC family. Interacts with UvrB in an incision complex.

The protein resides in the cytoplasm. In terms of biological role, the UvrABC repair system catalyzes the recognition and processing of DNA lesions. UvrC both incises the 5' and 3' sides of the lesion. The N-terminal half is responsible for the 3' incision and the C-terminal half is responsible for the 5' incision. This Microcystis aeruginosa (strain NIES-843 / IAM M-2473) protein is UvrABC system protein C.